Reading from the N-terminus, the 182-residue chain is WUSCHEL-related homeobox 5 (182 aa).

Positions 1–24 are disordered; the sequence is MSFSVKGRSLRGNNNGGTGTKCGR. The homeobox; WUS-type DNA-binding region spans 20 to 84; sequence TKCGRWNPTV…NHKARERQKR (65 aa).

This sequence belongs to the WUS homeobox family. As to expression, specifically expressed in the central cells of a quiescent center (QC) of the root.

It is found in the nucleus. Its function is as follows. Transcription factor, which may be involved in the specification and maintenance of the stem cells (QC cells) in the root apical meristem (RAM). In Arabidopsis thaliana (Mouse-ear cress), this protein is WUSCHEL-related homeobox 5 (WOX5).